A 146-amino-acid chain; its full sequence is Protein translocase subunit SecE (146 aa).

A disordered region spans residues 1–81 (MSDERYAASD…KVKKPKKSAD (81 aa)). A compositionally biased stretch (gly residues) spans 10 to 20 (DGGGTEVGSGT). Over residues 45–54 (RAANASNTGA) the composition is skewed to polar residues. Basic and acidic residues predominate over residues 69-81 (KEGKVKKPKKSAD). The helical transmembrane segment at 118–138 (VVLAFLAFMVALVGLADFGLA) threads the bilayer.

The protein belongs to the SecE/SEC61-gamma family. Component of the Sec protein translocase complex. Heterotrimer consisting of SecY, SecE and SecG subunits. The heterotrimers can form oligomers, although 1 heterotrimer is thought to be able to translocate proteins. Interacts with the ribosome. Interacts with SecDF, and other proteins may be involved. Interacts with SecA.

It localises to the cell membrane. Essential subunit of the Sec protein translocation channel SecYEG. Clamps together the 2 halves of SecY. May contact the channel plug during translocation. This chain is Protein translocase subunit SecE, found in Mycobacterium leprae (strain TN).